The primary structure comprises 472 residues: Glutamate--tRNA ligase (472 aa).

The 'HIGH' region signature appears at 7 to 17 (PSPTGFLHVGG). Positions 96, 98, 123, and 125 each coordinate Zn(2+). Residues 112 to 129 (ARKEKPRYDGRCRHRSEP) are compositionally biased toward basic and acidic residues. The tract at residues 112–134 (ARKEKPRYDGRCRHRSEPPSDQP) is disordered. The 'KMSKS' region motif lies at 234–238 (KLSKR). Lysine 237 serves as a coordination point for ATP.

Belongs to the class-I aminoacyl-tRNA synthetase family. Glutamate--tRNA ligase type 1 subfamily. Monomer. It depends on Zn(2+) as a cofactor.

The protein resides in the cytoplasm. It carries out the reaction tRNA(Glu) + L-glutamate + ATP = L-glutamyl-tRNA(Glu) + AMP + diphosphate. Functionally, catalyzes the attachment of glutamate to tRNA(Glu) in a two-step reaction: glutamate is first activated by ATP to form Glu-AMP and then transferred to the acceptor end of tRNA(Glu). The sequence is that of Glutamate--tRNA ligase from Magnetococcus marinus (strain ATCC BAA-1437 / JCM 17883 / MC-1).